Here is a 465-residue protein sequence, read N- to C-terminus: Phosphomannomutase/phosphoglucomutase (465 aa).

Ser-110 serves as the catalytic Phosphoserine intermediate. Mg(2+) is bound by residues Ser-110, Asp-244, Asp-246, and Asp-248. Glu-327, Ser-329, and His-331 together coordinate substrate.

This sequence belongs to the phosphohexose mutase family. In terms of assembly, monomer. Mg(2+) serves as cofactor.

The catalysed reaction is alpha-D-mannose 1-phosphate = D-mannose 6-phosphate. It catalyses the reaction alpha-D-glucose 1-phosphate = alpha-D-glucose 6-phosphate. It functions in the pathway nucleotide-sugar biosynthesis; GDP-alpha-D-mannose biosynthesis; alpha-D-mannose 1-phosphate from D-fructose 6-phosphate: step 2/2. The protein operates within bacterial outer membrane biogenesis; lipopolysaccharide biosynthesis. Functionally, the phosphomannomutase activity produces a precursor for alginate polymerization. The alginate layer causes a mucoid phenotype and provides a protective barrier against host immune defenses and antibiotics. Also involved in core-LPS biosynthesis due to its phosphoglucomutase activity. Essential for biofilm production. This is Phosphomannomutase/phosphoglucomutase (algC) from Pseudomonas syringae pv. tomato (strain ATCC BAA-871 / DC3000).